A 329-amino-acid chain; its full sequence is Probable allantoicase (329 aa).

Belongs to the allantoicase family.

The enzyme catalyses allantoate + H2O = (S)-ureidoglycolate + urea. The protein operates within nitrogen metabolism; (S)-allantoin degradation; (S)-ureidoglycolate from allantoate (aminidohydrolase route): step 1/1. The chain is Probable allantoicase from Nocardia farcinica (strain IFM 10152).